The chain runs to 461 residues: Bifunctional protein GlmU (461 aa).

Residues 1–230 (MSKIHAVVLA…PEETLGVNDR (230 aa)) form a pyrophosphorylase region. UDP-N-acetyl-alpha-D-glucosamine-binding positions include 9–12 (LAAG), K23, Q73, 78–79 (GT), 101–103 (YGD), G140, E155, N170, and N228. Residue D103 coordinates Mg(2+). N228 serves as a coordination point for Mg(2+). The linker stretch occupies residues 231–251 (VQLSEAEAYMKKRIMTGHMRN). The N-acetyltransferase stretch occupies residues 252–461 (GVTIIDPTST…KMPRKGKKQS (210 aa)). R333 and K351 together coordinate UDP-N-acetyl-alpha-D-glucosamine. H363 (proton acceptor) is an active-site residue. UDP-N-acetyl-alpha-D-glucosamine is bound by residues Y366 and N377. Acetyl-CoA contacts are provided by residues 386–387 (NY), A423, and R440.

The protein in the N-terminal section; belongs to the N-acetylglucosamine-1-phosphate uridyltransferase family. This sequence in the C-terminal section; belongs to the transferase hexapeptide repeat family. Homotrimer. Requires Mg(2+) as cofactor.

The protein localises to the cytoplasm. The enzyme catalyses alpha-D-glucosamine 1-phosphate + acetyl-CoA = N-acetyl-alpha-D-glucosamine 1-phosphate + CoA + H(+). It carries out the reaction N-acetyl-alpha-D-glucosamine 1-phosphate + UTP + H(+) = UDP-N-acetyl-alpha-D-glucosamine + diphosphate. The protein operates within nucleotide-sugar biosynthesis; UDP-N-acetyl-alpha-D-glucosamine biosynthesis; N-acetyl-alpha-D-glucosamine 1-phosphate from alpha-D-glucosamine 6-phosphate (route II): step 2/2. It participates in nucleotide-sugar biosynthesis; UDP-N-acetyl-alpha-D-glucosamine biosynthesis; UDP-N-acetyl-alpha-D-glucosamine from N-acetyl-alpha-D-glucosamine 1-phosphate: step 1/1. Its pathway is bacterial outer membrane biogenesis; LPS lipid A biosynthesis. Catalyzes the last two sequential reactions in the de novo biosynthetic pathway for UDP-N-acetylglucosamine (UDP-GlcNAc). The C-terminal domain catalyzes the transfer of acetyl group from acetyl coenzyme A to glucosamine-1-phosphate (GlcN-1-P) to produce N-acetylglucosamine-1-phosphate (GlcNAc-1-P), which is converted into UDP-GlcNAc by the transfer of uridine 5-monophosphate (from uridine 5-triphosphate), a reaction catalyzed by the N-terminal domain. This Brevibacillus brevis (strain 47 / JCM 6285 / NBRC 100599) protein is Bifunctional protein GlmU.